The following is a 471-amino-acid chain: Light-independent protochlorophyllide reductase subunit N (471 aa).

Residues cysteine 22, cysteine 47, and cysteine 107 each contribute to the [4Fe-4S] cluster site.

The protein belongs to the BchN/ChlN family. In terms of assembly, protochlorophyllide reductase is composed of three subunits; ChlL, ChlN and ChlB. Forms a heterotetramer of two ChlB and two ChlN subunits. The cofactor is [4Fe-4S] cluster.

It is found in the plastid. The protein localises to the chloroplast. The enzyme catalyses chlorophyllide a + oxidized 2[4Fe-4S]-[ferredoxin] + 2 ADP + 2 phosphate = protochlorophyllide a + reduced 2[4Fe-4S]-[ferredoxin] + 2 ATP + 2 H2O. It functions in the pathway porphyrin-containing compound metabolism; chlorophyll biosynthesis (light-independent). Its function is as follows. Component of the dark-operative protochlorophyllide reductase (DPOR) that uses Mg-ATP and reduced ferredoxin to reduce ring D of protochlorophyllide (Pchlide) to form chlorophyllide a (Chlide). This reaction is light-independent. The NB-protein (ChlN-ChlB) is the catalytic component of the complex. This Huperzia lucidula (Shining clubmoss) protein is Light-independent protochlorophyllide reductase subunit N.